The chain runs to 338 residues: tRNA-specific 2-thiouridylase MnmA (338 aa).

Residues Leu-6–Ser-13 and Met-32 each bind ATP. Cys-87 acts as the Nucleophile in catalysis. Cys-87 and Cys-185 form a disulfide bridge. Gly-111 serves as a coordination point for ATP. The segment at Lys-135 to Gln-137 is interaction with tRNA. Cys-185 acts as the Cysteine persulfide intermediate in catalysis. The tract at residues Arg-288–Tyr-289 is interaction with tRNA.

It belongs to the MnmA/TRMU family.

The protein localises to the cytoplasm. It carries out the reaction S-sulfanyl-L-cysteinyl-[protein] + uridine(34) in tRNA + AH2 + ATP = 2-thiouridine(34) in tRNA + L-cysteinyl-[protein] + A + AMP + diphosphate + H(+). Its function is as follows. Catalyzes the 2-thiolation of uridine at the wobble position (U34) of tRNA, leading to the formation of s(2)U34. The protein is tRNA-specific 2-thiouridylase MnmA of Syntrophomonas wolfei subsp. wolfei (strain DSM 2245B / Goettingen).